The chain runs to 158 residues: Regulator of sigma D (158 aa).

The protein belongs to the Rsd/AlgQ family. As to quaternary structure, interacts with RpoD.

It localises to the cytoplasm. Functionally, binds RpoD and negatively regulates RpoD-mediated transcription activation by preventing the interaction between the primary sigma factor RpoD with the catalytic core of the RNA polymerase and with promoter DNA. May be involved in replacement of the RNA polymerase sigma subunit from RpoD to RpoS during the transition from exponential growth to the stationary phase. This chain is Regulator of sigma D, found in Escherichia coli O6:H1 (strain CFT073 / ATCC 700928 / UPEC).